A 368-amino-acid chain; its full sequence is MAAKSFASRLRDSRRFLNGFLAGAVVGAAGAGLTALQFFRRPDAESAKLARQPHESAEEAVLEQFGFPLAGTETRRYTNHALSYDQAKRVPRWVLEHISKDKIIGDADRKHCKFKPDPSVPSAFSALNEDYIGSGWSRGHMAPAGNNKFSSEAMAETFYLSNIVPQNFDNNSGYWNRIEMYCRELTERFEDVWIVSGPLTLPHTRNDGTKTVSYQVIGEDNVAVPSHLYKVILARRSPESTEPLALGAFVVPNKAIGFQSQLSEFQVSLHDLEKMSGLVFFPRLDRSRDIRNICSVDTCKLLGFQEFTLYLSTRKIDGARSVARLEKVLEALKSSGVEPDDYFLSRYEKKLEELKAKEQKDAQLEKQS.

Residues 1 to 41 constitute a mitochondrion transit peptide; it reads MAAKSFASRLRDSRRFLNGFLAGAVVGAAGAGLTALQFFRR. H140 functions as the Proton acceptor in the catalytic mechanism. Position 171 (N171) interacts with a divalent metal cation.

The protein belongs to the DNA/RNA non-specific endonuclease family. Homodimer. A divalent metal cation serves as cofactor.

It is found in the mitochondrion inner membrane. Endo/exonuclease with nicking activity towards supercoiled DNA, a preference for single-stranded DNA and 5'-3' exonuclease activity. This chain is Nuclease EXOG, mitochondrial (Exog), found in Mus musculus (Mouse).